We begin with the raw amino-acid sequence, 203 residues long: Urease accessory protein UreE (203 aa).

Positions 170–190 are enriched in basic and acidic residues; sequence EHHGHSHSRSHDHDHDHDHQH. Residues 170-203 are disordered; it reads EHHGHSHSRSHDHDHDHDHQHGPSCSHGHHHGHR.

The protein belongs to the UreE family.

It localises to the cytoplasm. In terms of biological role, involved in urease metallocenter assembly. Binds nickel. Probably functions as a nickel donor during metallocenter assembly. The sequence is that of Urease accessory protein UreE from Burkholderia pseudomallei (strain 1710b).